A 503-amino-acid polypeptide reads, in one-letter code: DEAD-box ATP-dependent RNA helicase CshA (503 aa).

A Q motif motif is present at residues 2–30; that stretch reads QNFKELGISDKTVETLEAMGFKEPTPIQK. One can recognise a Helicase ATP-binding domain in the interval 33–203; sequence IPYTLEGKDI…QQFMKSPQIV (171 aa). Residue 46 to 53 participates in ATP binding; that stretch reads AQTGTGKT. A DEAD box motif is present at residues 150–153; it reads DEAD. A Helicase C-terminal domain is found at 214 to 375; the sequence is QIDEYYTIVK…LRPPHRKEVL (162 aa). Positions 436–503 are disordered; sequence EKPLARKNRQ…KGRTFADLQK (68 aa). Over residues 466-480 the composition is skewed to basic residues; that stretch reads KRSKGNFNKKKGKKT. Positions 481–490 are enriched in basic and acidic residues; the sequence is DRRERQDKGR.

The protein belongs to the DEAD box helicase family. CshA subfamily. In terms of assembly, oligomerizes, may be a member of the RNA degradosome.

Its subcellular location is the cytoplasm. The enzyme catalyses ATP + H2O = ADP + phosphate + H(+). Functionally, DEAD-box RNA helicase possibly involved in RNA degradation. Unwinds dsRNA in both 5'- and 3'-directions, has RNA-dependent ATPase activity. The chain is DEAD-box ATP-dependent RNA helicase CshA from Staphylococcus haemolyticus (strain JCSC1435).